The sequence spans 472 residues: Phosphoenolpyruvate carboxykinase (ATP), glycosomal (472 aa).

Position 221-228 (221-228 (GLSGTGKT)) interacts with ATP.

This sequence belongs to the phosphoenolpyruvate carboxykinase (ATP) family. As to quaternary structure, homodimer.

The protein localises to the glycosome. It catalyses the reaction oxaloacetate + ATP = phosphoenolpyruvate + ADP + CO2. It participates in carbohydrate biosynthesis; gluconeogenesis. Functionally, P60 has the capability to bind to microtubules and membrane vesicles in vitro. The protein is Phosphoenolpyruvate carboxykinase (ATP), glycosomal of Trypanosoma brucei brucei.